The sequence spans 560 residues: MNIVQETKRRLAAALTDAAATARAAGEISYDELPDFVIETPRDKTHGDFAANLALLLARQARQSPRNVAAAIVRHLERPQPGVARVEVAGPGFINFTLDNQWLLPVLPAVLAEDDHYGWSNIGQGAKVQVEFVSANPTGLLHMGNARGAALGDSIANLLTAVGYDVTREFYINDAGNQIENFGLSLEARYLQALGQEASIPEDGYHGEDLVATVGRFIAKYGDKYLDTDPALRREMLVRFALEEKLDAIRRALEDFGVTYDVWFSEQSLHDSGAVARAIADLEKAGYIYEKDGALWFKATSFGDVKDEVVVRKNGIPTYFAADIAYHRNKFERGFERVINIWGADHHGHVARLKGALQALGYDPRRLEVVLMQLVRLYQGGEILRMSKRTGQYVTLEELIEEVGRDAARYFFVMLKSDSHLEFDLDLARSQSADNPVYYVQYAHARICSILRLAKDRGLEVPPAREARLELLQDPAELELIKQIAAWPDTVAGAAQALEPHRLTRFAHDLASLFHSFYTSCRVLADDPEVRKARLVLVEATRITLRNVLHLLGVTAPERM.

The short motif at 135–145 (ANPTGLLHMGN) is the 'HIGH' region element.

The protein belongs to the class-I aminoacyl-tRNA synthetase family. As to quaternary structure, monomer.

Its subcellular location is the cytoplasm. The catalysed reaction is tRNA(Arg) + L-arginine + ATP = L-arginyl-tRNA(Arg) + AMP + diphosphate. The polypeptide is Arginine--tRNA ligase (Moorella thermoacetica (strain ATCC 39073 / JCM 9320)).